A 238-amino-acid polypeptide reads, in one-letter code: Probable transcriptional regulatory protein llmg_0242 (238 aa).

It belongs to the TACO1 family. YeeN subfamily.

It is found in the cytoplasm. This chain is Probable transcriptional regulatory protein llmg_0242, found in Lactococcus lactis subsp. cremoris (strain MG1363).